A 259-amino-acid chain; its full sequence is Electron transfer flavoprotein subunit beta (259 aa).

The protein belongs to the ETF beta-subunit/FixA family. In terms of assembly, heterodimer of an alpha and a beta subunit. The cofactor is FAD. AMP is required as a cofactor.

The electron transfer flavoprotein serves as a specific electron acceptor for other dehydrogenases. It transfers the electrons to the main respiratory chain via ETF-ubiquinone oxidoreductase (ETF dehydrogenase). The sequence is that of Electron transfer flavoprotein subunit beta (etfB) from Clostridium acetobutylicum (strain ATCC 824 / DSM 792 / JCM 1419 / IAM 19013 / LMG 5710 / NBRC 13948 / NRRL B-527 / VKM B-1787 / 2291 / W).